Reading from the N-terminus, the 662-residue chain is DNA ligase (662 aa).

NAD(+) is bound by residues 31–35 (DKDYD) and 79–80 (SL). Residue Lys-121 is the N6-AMP-lysine intermediate of the active site. NAD(+) contacts are provided by Arg-143, Glu-177, and Lys-313. Positions 406, 409, 422, and 428 each coordinate Zn(2+). The BRCT domain maps to 586–662 (VLESPFMGKT…LSEEEFENMI (77 aa)).

Belongs to the NAD-dependent DNA ligase family. LigA subfamily. The cofactor is Mg(2+). Requires Mn(2+) as cofactor.

It catalyses the reaction NAD(+) + (deoxyribonucleotide)n-3'-hydroxyl + 5'-phospho-(deoxyribonucleotide)m = (deoxyribonucleotide)n+m + AMP + beta-nicotinamide D-nucleotide.. Its function is as follows. DNA ligase that catalyzes the formation of phosphodiester linkages between 5'-phosphoryl and 3'-hydroxyl groups in double-stranded DNA using NAD as a coenzyme and as the energy source for the reaction. It is essential for DNA replication and repair of damaged DNA. The sequence is that of DNA ligase from Clostridium perfringens (strain ATCC 13124 / DSM 756 / JCM 1290 / NCIMB 6125 / NCTC 8237 / Type A).